The primary structure comprises 644 residues: Chaperone protein DnaK (644 aa).

Disordered stretches follow at residues 490 to 533 (QEEA…ELDD) and 570 to 644 (EELQ…EDDA). Over residues 492-513 (EAEKHKEEDEARRERIEARNEA) the composition is skewed to basic and acidic residues. Residues 523–533 (LLEENEEELDD) show a composition bias toward acidic residues. Residues 588-622 (GPGGAGGAAGAGPGGMGGMGGAAGPGGAGGAGPGG) show a composition bias toward gly residues. Positions 624 to 644 (DADDEEYVDADFEDVDDEDDA) are enriched in acidic residues.

This sequence belongs to the heat shock protein 70 family.

Its function is as follows. Acts as a chaperone. This is Chaperone protein DnaK from Halorubrum lacusprofundi (strain ATCC 49239 / DSM 5036 / JCM 8891 / ACAM 34).